The chain runs to 182 residues: ATP synthase subunit delta, organellar chromatophore (182 aa).

Belongs to the ATPase delta chain family. As to quaternary structure, F-type ATPases have 2 components, F(1) - the catalytic core - and F(0) - the membrane proton channel. F(1) has five subunits: alpha(3), beta(3), gamma(1), delta(1), epsilon(1). CF(0) has four main subunits: a(1), b(1), b'(1) and c(10-14). The alpha and beta chains form an alternating ring which encloses part of the gamma chain. F(1) is attached to F(0) by a central stalk formed by the gamma and epsilon chains, while a peripheral stalk is formed by the delta, b and b' chains.

The protein localises to the plastid. The protein resides in the organellar chromatophore thylakoid membrane. In terms of biological role, f(1)F(0) ATP synthase produces ATP from ADP in the presence of a proton or sodium gradient. F-type ATPases consist of two structural domains, F(1) containing the extramembraneous catalytic core and F(0) containing the membrane proton channel, linked together by a central stalk and a peripheral stalk. During catalysis, ATP synthesis in the catalytic domain of F(1) is coupled via a rotary mechanism of the central stalk subunits to proton translocation. This protein is part of the stalk that links CF(0) to CF(1). It either transmits conformational changes from CF(0) to CF(1) or is implicated in proton conduction. The polypeptide is ATP synthase subunit delta, organellar chromatophore (Paulinella chromatophora).